Consider the following 525-residue polypeptide: GMP synthase [glutamine-hydrolyzing] (525 aa).

The Glutamine amidotransferase type-1 domain maps to 16–205 (PVLVVDFGAQ…LHDFAGIGAR (190 aa)). Catalysis depends on C93, which acts as the Nucleophile. Catalysis depends on residues H179 and E181. A GMPS ATP-PPase domain is found at 206-399 (WTPANIANAL…LGLPEEIVAR (194 aa)). An ATP-binding site is contributed by 233–239 (SGGVDSA).

In terms of assembly, homodimer.

It catalyses the reaction XMP + L-glutamine + ATP + H2O = GMP + L-glutamate + AMP + diphosphate + 2 H(+). It participates in purine metabolism; GMP biosynthesis; GMP from XMP (L-Gln route): step 1/1. Functionally, catalyzes the synthesis of GMP from XMP. In Mycobacterium marinum (strain ATCC BAA-535 / M), this protein is GMP synthase [glutamine-hydrolyzing].